The primary structure comprises 200 residues: MRFLRWIRQIWRKVPNWVLFWKHLAKPGLSDQREKHLLKGPEKTSKDFDTVKLANAQKEDMVSDLDVCPGVLRSVKERSPLHDRESRSSRDSRSLMTVVNSVSTFMFSVLQSGWRLCRWKSSMSTGKVSSHTRTGSALGTPEAEMLREVYLVLWVIRKQLRELARRQERRRRRRMRSHASHTSRHSESVQGLKHDARSPL.

S63 carries the phosphoserine modification. Basic residues predominate over residues 167-183 (QERRRRRRMRSHASHTS). The tract at residues 167-200 (QERRRRRRMRSHASHTSRHSESVQGLKHDARSPL) is disordered. Basic and acidic residues predominate over residues 184-200 (RHSESVQGLKHDARSPL).

The protein localises to the cytoplasmic vesicle. The protein resides in the secretory vesicle. It localises to the acrosome. May play an important role in acrosome formation and nucleus shaping during spermiogenesis. This chain is Sperm acrosome developmental regulator (Spacdr), found in Rattus norvegicus (Rat).